The following is an 84-amino-acid chain: Large ribosomal subunit protein bL27 (84 aa).

Belongs to the bacterial ribosomal protein bL27 family.

In Salinispora tropica (strain ATCC BAA-916 / DSM 44818 / JCM 13857 / NBRC 105044 / CNB-440), this protein is Large ribosomal subunit protein bL27.